The following is an 80-amino-acid chain: MKLTCVMIVAVLFLTAWTFVTADSIRALEDLFAKAPDEMENSGASPLNERDCRPVGQYCGIPYEHNWRCCSQLCAIICVS.

Positions 1 to 22 (MKLTCVMIVAVLFLTAWTFVTA) are cleaved as a signal peptide. Positions 23-50 (DSIRALEDLFAKAPDEMENSGASPLNER) are excised as a propeptide. 3 disulfide bridges follow: cysteine 52/cysteine 70, cysteine 59/cysteine 74, and cysteine 69/cysteine 78.

Belongs to the conotoxin O1 superfamily. Expressed by the venom duct.

Its subcellular location is the secreted. In terms of biological role, omega-conotoxins act at presynaptic membranes, they bind and block voltage-gated calcium channels (Cav). This chain is Omega-conotoxin-like PuIA, found in Conus pulicarius (Flea-bitten cone).